The sequence spans 256 residues: 1-(5-phosphoribosyl)-5-[(5-phosphoribosylamino)methylideneamino] imidazole-4-carboxamide isomerase (256 aa).

Asp-8 serves as the catalytic Proton acceptor. Residue Asp-129 is the Proton donor of the active site.

It belongs to the HisA/HisF family.

It localises to the cytoplasm. The enzyme catalyses 1-(5-phospho-beta-D-ribosyl)-5-[(5-phospho-beta-D-ribosylamino)methylideneamino]imidazole-4-carboxamide = 5-[(5-phospho-1-deoxy-D-ribulos-1-ylimino)methylamino]-1-(5-phospho-beta-D-ribosyl)imidazole-4-carboxamide. The protein operates within amino-acid biosynthesis; L-histidine biosynthesis; L-histidine from 5-phospho-alpha-D-ribose 1-diphosphate: step 4/9. This is 1-(5-phosphoribosyl)-5-[(5-phosphoribosylamino)methylideneamino] imidazole-4-carboxamide isomerase from Synechococcus sp. (strain WH7803).